We begin with the raw amino-acid sequence, 210 residues long: Large ribosomal subunit protein uL4 (210 aa).

The tract at residues 46 to 96 is disordered; that stretch reads QGNASTKTRAEVRGGGRKPWRQKGTGRARAGSNRSPLWRGGGVIFGPKPRD. Residues 60–71 show a composition bias toward basic residues; it reads GGRKPWRQKGTG.

Belongs to the universal ribosomal protein uL4 family. In terms of assembly, part of the 50S ribosomal subunit.

Its function is as follows. One of the primary rRNA binding proteins, this protein initially binds near the 5'-end of the 23S rRNA. It is important during the early stages of 50S assembly. It makes multiple contacts with different domains of the 23S rRNA in the assembled 50S subunit and ribosome. In terms of biological role, forms part of the polypeptide exit tunnel. This Gloeothece citriformis (strain PCC 7424) (Cyanothece sp. (strain PCC 7424)) protein is Large ribosomal subunit protein uL4.